The chain runs to 310 residues: MSWTEIVIEVARTHAEALSDALMEAGALSVSVEDADFGTDAEQPLFGEPGMEPTEAAWEHSRVVALTPVEADQAAIVAEAAQAVGLAATDVAFTLRAVEEQDWVRLTQSQFEPIHIGKNIWVVPSWHDAPDPQALVLELDPGLAFGTGSHPTTRLCMEWLEAHPPVGLSVLDYGCGSGILAMVAAKLGSTDVIGIDIDPQAIKSALFNTERNHCEVAYYLPDEFASSGHAHTFDVVVANILANPLKVMAPMLSGRVKPGGKLILSGVLATQVEEVSAAYAPFIKLSVWAEHEGWVALAGQLPPGPESGQA.

Thr153, Gly174, Asp196, and Asn239 together coordinate S-adenosyl-L-methionine.

The protein belongs to the methyltransferase superfamily. PrmA family.

The protein localises to the cytoplasm. It carries out the reaction L-lysyl-[protein] + 3 S-adenosyl-L-methionine = N(6),N(6),N(6)-trimethyl-L-lysyl-[protein] + 3 S-adenosyl-L-homocysteine + 3 H(+). Methylates ribosomal protein L11. This is Ribosomal protein L11 methyltransferase from Janthinobacterium sp. (strain Marseille) (Minibacterium massiliensis).